Consider the following 366-residue polypeptide: D-alanine--D-alanine ligase (366 aa).

The 204-residue stretch at 145–348 folds into the ATP-grasp domain; it reads KRLLDDAGLA…YQSLITKLIE (204 aa). 175 to 230 is an ATP binding site; that stretch reads VEQLGLPLFIKPANLGSSVGISKVNNEAEFNAALSMAFEYDLKVIIESAIVGREIE. Aspartate 302, glutamate 315, and asparagine 317 together coordinate Mg(2+).

It belongs to the D-alanine--D-alanine ligase family. Requires Mg(2+) as cofactor. It depends on Mn(2+) as a cofactor.

It is found in the cytoplasm. It carries out the reaction 2 D-alanine + ATP = D-alanyl-D-alanine + ADP + phosphate + H(+). Its pathway is cell wall biogenesis; peptidoglycan biosynthesis. In terms of biological role, cell wall formation. This is D-alanine--D-alanine ligase from Proteus mirabilis (strain HI4320).